The primary structure comprises 436 residues: Probable D-serine dehydratase (436 aa).

Position 111 is an N6-(pyridoxal phosphate)lysine (Lys-111).

The protein belongs to the serine/threonine dehydratase family. DsdA subfamily. Pyridoxal 5'-phosphate is required as a cofactor.

The catalysed reaction is D-serine = pyruvate + NH4(+). In Lactiplantibacillus plantarum (strain ATCC BAA-793 / NCIMB 8826 / WCFS1) (Lactobacillus plantarum), this protein is Probable D-serine dehydratase.